The sequence spans 241 residues: tRNA (guanine-N(1)-)-methyltransferase (241 aa).

S-adenosyl-L-methionine is bound by residues glycine 123 and 143 to 148 (IGDYVL).

The protein belongs to the RNA methyltransferase TrmD family. In terms of assembly, homodimer.

The protein localises to the cytoplasm. The enzyme catalyses guanosine(37) in tRNA + S-adenosyl-L-methionine = N(1)-methylguanosine(37) in tRNA + S-adenosyl-L-homocysteine + H(+). Specifically methylates guanosine-37 in various tRNAs. The sequence is that of tRNA (guanine-N(1)-)-methyltransferase from Roseobacter denitrificans (strain ATCC 33942 / OCh 114) (Erythrobacter sp. (strain OCh 114)).